We begin with the raw amino-acid sequence, 315 residues long: Homoserine kinase (315 aa).

97-107 (PPARGLGSSAT) lines the ATP pocket.

This sequence belongs to the GHMP kinase family. Homoserine kinase subfamily.

The protein resides in the cytoplasm. The enzyme catalyses L-homoserine + ATP = O-phospho-L-homoserine + ADP + H(+). Its pathway is amino-acid biosynthesis; L-threonine biosynthesis; L-threonine from L-aspartate: step 4/5. Its function is as follows. Catalyzes the ATP-dependent phosphorylation of L-homoserine to L-homoserine phosphate. The polypeptide is Homoserine kinase (Prochlorococcus marinus (strain NATL2A)).